Consider the following 87-residue polypeptide: UPF0335 protein RL4065 (87 aa).

The protein belongs to the UPF0335 family.

The chain is UPF0335 protein RL4065 from Rhizobium johnstonii (strain DSM 114642 / LMG 32736 / 3841) (Rhizobium leguminosarum bv. viciae).